A 498-amino-acid polypeptide reads, in one-letter code: Phosphatidylserine synthase (498 aa).

Residues methionine 1–arginine 65 form a disordered region. Topologically, residues methionine 1–tyrosine 92 are cytoplasmic. Positions serine 7–serine 25 are enriched in polar residues. The helical transmembrane segment at lysine 93 to valine 113 threads the bilayer. Over arginine 114–asparagine 122 the chain is Lumenal. Residues leucine 123–proline 143 traverse the membrane as a helical segment. The Cytoplasmic portion of the chain corresponds to asparagine 144–alanine 153. Residues valine 154–phenylalanine 174 form a helical membrane-spanning segment. Residues glutamine 175–methionine 239 lie on the Lumenal side of the membrane. Residue asparagine 205 is glycosylated (N-linked (GlcNAc...) asparagine). A helical membrane pass occupies residues glycine 240–leucine 260. Over proline 261–cysteine 266 the chain is Cytoplasmic. Residues tryptophan 267–leucine 287 form a helical membrane-spanning segment. Topologically, residues lysine 288–arginine 339 are lumenal. A helical membrane pass occupies residues phenylalanine 340–leucine 360. The Cytoplasmic segment spans residues lysine 361 to proline 367. Residues proline 368–valine 388 form a helical membrane-spanning segment. The Lumenal segment spans residues arginine 389–arginine 402. The chain crosses the membrane as a helical span at residues valine 403–lysine 423. Over asparagine 424–asparagine 436 the chain is Cytoplasmic. A helical membrane pass occupies residues isoleucine 437–tyrosine 457. At tryptophan 458–lysine 498 the chain is on the lumenal side. Residues lysine 465–lysine 498 are disordered. The span at proline 478–serine 490 shows a compositional bias: low complexity.

It belongs to the phosphatidyl serine synthase family.

Its subcellular location is the endoplasmic reticulum membrane. It carries out the reaction a 1,2-diacyl-sn-glycero-3-phosphoethanolamine + L-serine = a 1,2-diacyl-sn-glycero-3-phospho-L-serine + ethanolamine. The protein operates within phospholipid metabolism; phosphatidylserine biosynthesis. In terms of biological role, catalyzes a base-exchange reaction in which the polar head group of phosphatidylethanolamine (PE) is replaced by L-serine. This Drosophila melanogaster (Fruit fly) protein is Phosphatidylserine synthase.